A 200-amino-acid chain; its full sequence is Recombination protein RecR (200 aa).

The C4-type zinc finger occupies 59–74; sequence CDICGNVCESSPCPVC. In terms of domain architecture, Toprim spans 82-177; sequence SVICVVEEPK…KVTRLASGLP (96 aa).

Belongs to the RecR family.

May play a role in DNA repair. It seems to be involved in an RecBC-independent recombinational process of DNA repair. It may act with RecF and RecO. The chain is Recombination protein RecR from Bifidobacterium longum subsp. infantis (strain ATCC 15697 / DSM 20088 / JCM 1222 / NCTC 11817 / S12).